Consider the following 311-residue polypeptide: uncharacterized protein (311 aa).

The next 9 helical transmembrane spans lie at 11–31 (LDNW…GYLS), 34–54 (VGIV…FLSL), 72–92 (LAIS…LFGI), 101–121 (HVIV…FVAQ), 147–167 (IEGI…WYLM), 198–218 (WFGV…FALS), 233–253 (GFIA…SIVI), 257–277 (FALA…TYLL), and 279–299 (TIPF…NVGP).

It is found in the cell membrane. This is an uncharacterized protein from Mycoplasma pneumoniae (strain ATCC 29342 / M129 / Subtype 1) (Mycoplasmoides pneumoniae).